The following is a 361-amino-acid chain: Probable dual-specificity RNA methyltransferase RlmN (361 aa).

The active-site Proton acceptor is glutamate 91. In terms of domain architecture, Radical SAM core spans 97–329 (QHYGLSVCVT…KKKGGNCVVR (233 aa)). Residues cysteine 104 and cysteine 340 are joined by a disulfide bond. Residues cysteine 111, cysteine 115, and cysteine 118 each contribute to the [4Fe-4S] cluster site. S-adenosyl-L-methionine contacts are provided by residues 163–164 (GE), serine 195, 218–220 (SLH), and asparagine 296. The active-site S-methylcysteine intermediate is the cysteine 340.

This sequence belongs to the radical SAM superfamily. RlmN family. [4Fe-4S] cluster serves as cofactor.

The protein resides in the cytoplasm. The enzyme catalyses adenosine(2503) in 23S rRNA + 2 reduced [2Fe-2S]-[ferredoxin] + 2 S-adenosyl-L-methionine = 2-methyladenosine(2503) in 23S rRNA + 5'-deoxyadenosine + L-methionine + 2 oxidized [2Fe-2S]-[ferredoxin] + S-adenosyl-L-homocysteine. It carries out the reaction adenosine(37) in tRNA + 2 reduced [2Fe-2S]-[ferredoxin] + 2 S-adenosyl-L-methionine = 2-methyladenosine(37) in tRNA + 5'-deoxyadenosine + L-methionine + 2 oxidized [2Fe-2S]-[ferredoxin] + S-adenosyl-L-homocysteine. Functionally, specifically methylates position 2 of adenine 2503 in 23S rRNA and position 2 of adenine 37 in tRNAs. This Streptococcus pneumoniae (strain P1031) protein is Probable dual-specificity RNA methyltransferase RlmN.